The primary structure comprises 248 residues: 1-(5-phosphoribosyl)-5-[(5-phosphoribosylamino)methylideneamino] imidazole-4-carboxamide isomerase (248 aa).

The active-site Proton acceptor is Asp8. The Proton donor role is filled by Asp131.

It belongs to the HisA/HisF family.

The protein resides in the cytoplasm. The enzyme catalyses 1-(5-phospho-beta-D-ribosyl)-5-[(5-phospho-beta-D-ribosylamino)methylideneamino]imidazole-4-carboxamide = 5-[(5-phospho-1-deoxy-D-ribulos-1-ylimino)methylamino]-1-(5-phospho-beta-D-ribosyl)imidazole-4-carboxamide. It participates in amino-acid biosynthesis; L-histidine biosynthesis; L-histidine from 5-phospho-alpha-D-ribose 1-diphosphate: step 4/9. This is 1-(5-phosphoribosyl)-5-[(5-phosphoribosylamino)methylideneamino] imidazole-4-carboxamide isomerase from Cupriavidus necator (strain ATCC 17699 / DSM 428 / KCTC 22496 / NCIMB 10442 / H16 / Stanier 337) (Ralstonia eutropha).